We begin with the raw amino-acid sequence, 385 residues long: Putative transport protein BpOF4_00890 (385 aa).

The next 8 membrane-spanning stretches (helical) occupy residues 42–62 (TIWI…ILPV), 63–83 (SLPL…VNAL), 93–113 (VAVM…GYYI), 191–211 (SIPG…LFML), 255–275 (IIIF…VALL), 276–296 (MAFI…VILA), 304–324 (IVGD…LLII), and 350–370 (LGLM…VIAF).

It belongs to the autoinducer-2 exporter (AI-2E) (TC 2.A.86) family.

The protein resides in the cell membrane. The chain is Putative transport protein BpOF4_00890 from Alkalihalophilus pseudofirmus (strain ATCC BAA-2126 / JCM 17055 / OF4) (Bacillus pseudofirmus).